A 142-amino-acid chain; its full sequence is Large ribosomal subunit protein uL11 (142 aa).

Residue alanine 2 is modified to N,N,N-trimethylalanine. Residues lysine 4 and lysine 40 each carry the N6,N6,N6-trimethyllysine modification.

This sequence belongs to the universal ribosomal protein uL11 family. In terms of assembly, part of the ribosomal stalk of the 50S ribosomal subunit. Interacts with L10 and the large rRNA to form the base of the stalk. L10 forms an elongated spine to which L12 dimers bind in a sequential fashion forming a multimeric L10(L12)X complex. One or more lysine residues are methylated.

Its function is as follows. Forms part of the ribosomal stalk which helps the ribosome interact with GTP-bound translation factors. This chain is Large ribosomal subunit protein uL11, found in Shigella flexneri.